We begin with the raw amino-acid sequence, 332 residues long: RNA polymerase II holoenzyme cyclin-like subunit (332 aa).

Residues 74 to 175 (RIYCYFLIMK…LIEELQSYMI (102 aa)) enclose the Cyclin N-terminal domain.

This sequence belongs to the cyclin family. Cyclin C subfamily. In terms of assembly, component of the SRB8-11 complex, a regulatory module of the Mediator complex.

It localises to the nucleus. Component of the SRB8-11 complex. The SRB8-11 complex is a regulatory module of the Mediator complex which is itself involved in regulation of basal and activated RNA polymerase II-dependent transcription. The SRB8-11 complex may be involved in the transcriptional repression of a subset of genes regulated by Mediator. It may inhibit the association of the Mediator complex with RNA polymerase II to form the holoenzyme complex. The SRB8-11 complex phosphorylates the C-terminal domain (CTD) of the largest subunit of RNA polymerase II. This chain is RNA polymerase II holoenzyme cyclin-like subunit (SSN8), found in Eremothecium gossypii (strain ATCC 10895 / CBS 109.51 / FGSC 9923 / NRRL Y-1056) (Yeast).